Consider the following 224-residue polypeptide: Ribonuclease HII (224 aa).

The 185-residue stretch at 17-201 (GTVIGVDEAG…VLSNLSVKKV (185 aa)) folds into the RNase H type-2 domain. A divalent metal cation contacts are provided by Asp-23, Glu-24, and Asp-111.

Belongs to the RNase HII family. Mn(2+) is required as a cofactor. Mg(2+) serves as cofactor.

The protein localises to the cytoplasm. The catalysed reaction is Endonucleolytic cleavage to 5'-phosphomonoester.. Endonuclease that specifically degrades the RNA of RNA-DNA hybrids. In Pseudothermotoga lettingae (strain ATCC BAA-301 / DSM 14385 / NBRC 107922 / TMO) (Thermotoga lettingae), this protein is Ribonuclease HII.